The sequence spans 139 residues: Translation initiation factor 2 subunit beta (139 aa).

It belongs to the eIF-2-beta/eIF-5 family. Heterotrimer composed of an alpha, a beta and a gamma chain.

Functionally, eIF-2 functions in the early steps of protein synthesis by forming a ternary complex with GTP and initiator tRNA. The protein is Translation initiation factor 2 subunit beta of Sulfurisphaera tokodaii (strain DSM 16993 / JCM 10545 / NBRC 100140 / 7) (Sulfolobus tokodaii).